The sequence spans 280 residues: Hydrolase MT0498 (280 aa).

The CN hydrolase domain occupies 1-251 (MRIALAQIRS…PQLLVADIDV (251 aa)). Glutamate 40 acts as the Proton acceptor in catalysis. Lysine 110 functions as the Proton donor in the catalytic mechanism. The active-site Nucleophile is the cysteine 146.

It belongs to the carbon-nitrogen hydrolase superfamily. NIT1/NIT2 family.

This Mycobacterium tuberculosis (strain CDC 1551 / Oshkosh) protein is Hydrolase MT0498.